The following is a 459-amino-acid chain: Ribulose bisphosphate carboxylase (459 aa).

Residue N111 coordinates substrate. K166 (proton acceptor) is an active-site residue. K168 is a binding site for substrate. Positions 191, 193, and 194 each coordinate Mg(2+). K191 carries the N6-carboxylysine modification. H287 (proton acceptor) is an active-site residue. Substrate is bound by residues R288, H321, and S368.

This sequence belongs to the RuBisCO large chain family. Type II subfamily. Homodimer. It depends on Mg(2+) as a cofactor.

The catalysed reaction is 2 (2R)-3-phosphoglycerate + 2 H(+) = D-ribulose 1,5-bisphosphate + CO2 + H2O. It carries out the reaction D-ribulose 1,5-bisphosphate + O2 = 2-phosphoglycolate + (2R)-3-phosphoglycerate + 2 H(+). Its function is as follows. RuBisCO catalyzes two reactions: the carboxylation of D-ribulose 1,5-bisphosphate, the primary event in carbon dioxide fixation, as well as the oxidative fragmentation of the pentose substrate. Both reactions occur simultaneously and in competition at the same active site. The sequence is that of Ribulose bisphosphate carboxylase from Paramagnetospirillum magnetotacticum (Aquaspirillum magnetotacticum).